Reading from the N-terminus, the 1275-residue chain is Myosin-1 (1275 aa).

The 693-residue stretch at Val35–Asp727 folds into the Myosin motor domain. Gly128–Thr135 contacts ATP. Ser361 bears the Phosphoserine mark. Residues Thr410–Ser493 are actin-binding. IQ domains are found at residues His731–Ala751 and Ala752–Gly777. The region spanning Arg785–Gly974 is the TH1 domain. Disordered stretches follow at residues Ser966 to Asn1064, Gln1089 to Lys1128, Ser1183 to Ser1230, and Ile1251 to Trp1275. Polar residues predominate over residues Pro977–Val992. Low complexity predominate over residues Pro1095–Ala1106. Positions Pro1107–Ser1121 are enriched in pro residues. Positions Pro1127–Pro1187 constitute an SH3 domain. The span at Ala1254 to Asp1263 shows a compositional bias: basic and acidic residues. The segment covering Ser1264 to Trp1275 has biased composition (acidic residues).

This sequence belongs to the TRAFAC class myosin-kinesin ATPase superfamily. Myosin family. Post-translationally, phosphorylation of the TEDS site (Ser-361) is required for the polarization of the actin cytoskeleton. Phosphorylation probably activates the myosin-I ATPase activity.

The protein resides in the cytoplasm. It is found in the cytoskeleton. It localises to the actin patch. Functionally, type-I myosin implicated in the organization of the actin cytoskeleton. Required for proper actin cytoskeleton polarization. At the cell cortex, assembles in patch-like structures together with proteins from the actin-polymerizing machinery and promotes actin assembly. Functions as actin nucleation-promoting factor (NPF) for the Arp2/3 complex. This is Myosin-1 (MYO1) from Meyerozyma guilliermondii (strain ATCC 6260 / CBS 566 / DSM 6381 / JCM 1539 / NBRC 10279 / NRRL Y-324) (Yeast).